We begin with the raw amino-acid sequence, 203 residues long: uncharacterized protein (203 aa).

Belongs to the mimivirus L332/L333/L334 family.

This is an uncharacterized protein from Acanthamoeba polyphaga mimivirus (APMV).